The sequence spans 228 residues: Small ribosomal subunit protein uS3 (228 aa).

Residues 39 to 107 (VREYLQDKLK…PVHINIEEIR (69 aa)) enclose the KH type-2 domain.

It belongs to the universal ribosomal protein uS3 family. Part of the 30S ribosomal subunit. Forms a tight complex with proteins S10 and S14.

Binds the lower part of the 30S subunit head. Binds mRNA in the 70S ribosome, positioning it for translation. The sequence is that of Small ribosomal subunit protein uS3 from Pseudomonas aeruginosa (strain UCBPP-PA14).